The chain runs to 563 residues: Rhotekin (563 aa).

Arginine 14 is subject to Omega-N-methylarginine. In terms of domain architecture, REM-1 spans 17-98 (ALEMEFKRGR…LQRRKEAQVL (82 aa)). 2 positions are modified to phosphoserine: serine 30 and serine 106. Residues 96–116 (QVLGKTSRRPSDSGPPAERSP) form a disordered region. Arginine 230 is modified (asymmetric dimethylarginine). Phosphoserine is present on serine 232. Positions 309–416 (QPTASGTLRV…WMEALWQLFF (108 aa)) constitute a PH domain. Residues 518–563 (TFSLDAVPPDHSPRARSVAPLPPQRSPRTRGLCSKGQPRTWLQSPV) are disordered. A phosphoserine mark is found at serine 520, serine 529, and serine 543.

Interacts via its C-terminal region with the TAX1BP3 PDZ domain. This interaction facilitates Rho-mediated activation of the c-Fos serum response element (SRE). Interacts with SEPT9. Specifically binds to GTP-bound RHOA, RHOB and RHOC and inhibits their GTPase activity. As to expression, highly expressed in prostate, moderately in kidney, heart, brain, spleen, testis, placenta, small intestine, pancreas, skeletal muscle and peripheral blood leukocytes, and weakly in ovary, colon and thymus. Weakly expressed in all normal cell lines tested. Overexpressed in various cancer cell lines.

In terms of biological role, mediates Rho signaling to activate NF-kappa-B and may confer increased resistance to apoptosis to cells in gastric tumorigenesis. May play a novel role in the organization of septin structures. The protein is Rhotekin of Homo sapiens (Human).